Reading from the N-terminus, the 88-residue chain is uncharacterized protein (88 aa).

This is an uncharacterized protein from Thermoproteus tenax virus 1 (strain KRA1) (TTV1).